The following is a 371-amino-acid chain: MTGMVGTILRRKAEQNMTDVTIRNVTKRYGALTVIPQLSFRIEDGEFVVLVGPSGCGKSTLLRMLAGLEEISGGDLLMGADVINDRPAKERDMAIVFQNYALYPHMTVAENMGFALKLRKRPRAEIDERVDKAAAILGLGKLLDRYPRALSGGQRQRVAMGRAIVRDPQVFLFDEPLSNLDAKLRVQMRAEIKALHQRLKITTVYVTHDQIEAMTMADKIVVMNEGRVEQMGTPLELYDRPANIFVAGFIGSPSMNFLPATVAATNGPLLKTPEGVALPIDGGPTLTGRSEVTYGIRPEHLQLGETGIPAEVVVVEPTGSETQLYVTVGGREVVAVLRDRVDVRPGEKIWLTPRKGCAHLFDPNTGARIAG.

The region spanning Val-20–Ile-250 is the ABC transporter domain. Gly-52 to Ser-59 contributes to the ATP binding site.

It belongs to the ABC transporter superfamily.

The protein localises to the cell inner membrane. In terms of biological role, probably part of a binding-protein-dependent transport system y4oPQRS. This system probably transports a sugar-like molecule. Probably responsible for energy coupling to the transport system. This is an uncharacterized protein from Sinorhizobium fredii (strain NBRC 101917 / NGR234).